The chain runs to 45 residues: Mu-conotoxin-like Cal 12.1.1d (45 aa).

4 disulfides stabilise this stretch: C3-C16, C11-C28, C18-C33, and C27-C39. W17 bears the 6'-bromotryptophan mark. A 4-carboxyglutamate modification is found at E21. The residue at position 23 (P23) is a 4-hydroxyproline. W37 and W38 each carry 6'-bromotryptophan. P40 carries the post-translational modification 4-hydroxyproline. At W44 the chain carries 6'-bromotryptophan.

Expressed by the venom duct.

Its subcellular location is the secreted. Mu-conotoxins block voltage-gated sodium channels. This toxin reversibly blocks voltage-gated sodium channel in cephalopods, with no alteration in the voltage dependence of sodium conductance or on the kinetics of inactivation. The chain is Mu-conotoxin-like Cal 12.1.1d from Californiconus californicus (California cone).